Here is a 187-residue protein sequence, read N- to C-terminus: Elongation factor P (187 aa).

It belongs to the elongation factor P family.

The protein localises to the cytoplasm. Its pathway is protein biosynthesis; polypeptide chain elongation. Functionally, involved in peptide bond synthesis. Stimulates efficient translation and peptide-bond synthesis on native or reconstituted 70S ribosomes in vitro. Probably functions indirectly by altering the affinity of the ribosome for aminoacyl-tRNA, thus increasing their reactivity as acceptors for peptidyl transferase. The sequence is that of Elongation factor P from Rhodospirillum rubrum (strain ATCC 11170 / ATH 1.1.1 / DSM 467 / LMG 4362 / NCIMB 8255 / S1).